Here is a 238-residue protein sequence, read N- to C-terminus: MRPNARAINQPRPIKITRHYTKHAEGSVLVEFGETKVICTATVEDSVPRFLKGQGKGWVTAEYGMLPRSTHSRMQREAAKGKQGGRTMEIQRLIARSLRAMVDLEALGERAITLDCDVIQADGGTRTASITGACVALIDAINFLLQNGTLTTNPIKGLVAAISVGIVNGETVCDLEYVEDSIAETDMNVVMMEDGRMIEVQGTAEGEPFSHAELLTLLDLAKQGCEQLFVAQRVALAE.

Residues Arg86 and 124 to 126 (GTR) contribute to the phosphate site.

This sequence belongs to the RNase PH family. In terms of assembly, homohexameric ring arranged as a trimer of dimers.

It catalyses the reaction tRNA(n+1) + phosphate = tRNA(n) + a ribonucleoside 5'-diphosphate. Phosphorolytic 3'-5' exoribonuclease that plays an important role in tRNA 3'-end maturation. Removes nucleotide residues following the 3'-CCA terminus of tRNAs; can also add nucleotides to the ends of RNA molecules by using nucleoside diphosphates as substrates, but this may not be physiologically important. Probably plays a role in initiation of 16S rRNA degradation (leading to ribosome degradation) during starvation. The polypeptide is Ribonuclease PH (Histophilus somni (strain 2336) (Haemophilus somnus)).